Reading from the N-terminus, the 258-residue chain is MLILISPAKTLDYQSPLTTTRYTLPELLDNAQQLIHEARKLTPPQISSLMRISDKLAGINAARFHDWQPNFTPENARQAILAFKGDVYTGLQAETFSEDDFDFAQQHLRMISGLYGVLRPLDLMQPYRLEMGIRLENARGKDLYQFWGDIITNKLNEALAAQGDNVVINLASDEYFKSVKPKKLNAEIIKPVFLDEKNGKFKIISFYAKKARGLMSRFIIENRLTKPEQLTGFNSEGYFFDEASSSNGELVFKRYEQR.

The protein belongs to the UPF0246 family.

The protein is UPF0246 protein YaaA of Escherichia coli (strain UTI89 / UPEC).